The sequence spans 122 residues: Large ribosomal subunit protein uL14 (122 aa).

This sequence belongs to the universal ribosomal protein uL14 family. As to quaternary structure, part of the 50S ribosomal subunit. Forms a cluster with proteins L3 and L19. In the 70S ribosome, L14 and L19 interact and together make contacts with the 16S rRNA in bridges B5 and B8.

Its function is as follows. Binds to 23S rRNA. Forms part of two intersubunit bridges in the 70S ribosome. This Desulforapulum autotrophicum (strain ATCC 43914 / DSM 3382 / VKM B-1955 / HRM2) (Desulfobacterium autotrophicum) protein is Large ribosomal subunit protein uL14.